We begin with the raw amino-acid sequence, 648 residues long: Rho GTPase-activating protein 25 (648 aa).

A PH domain is found at 46-151 (RPIKVGWLKK…WVKFLRRVAG (106 aa)). The 195-residue stretch at 160 to 354 (QRLDETVAYE…MMIRDHEVLF (195 aa)) folds into the Rho-GAP domain. Residues 356–559 (KSKDAPISPP…DLDSLQRTVQ (204 aa)) form a disordered region. Phosphoserine is present on residues Ser-363, Ser-396, and Ser-403. Over residues 393–410 (RTDSFSNTASSPDATSPT) the composition is skewed to polar residues. Thr-407 carries the phosphothreonine modification. Positions 417 to 431 (QHQEDSGKAPRENPG) are enriched in basic and acidic residues. Polar residues-rich tracts occupy residues 453-462 (SAFQGTTSSK) and 497-515 (DQRT…SQGN). The residue at position 537 (Ser-537) is a Phosphoserine. A coiled-coil region spans residues 540–641 (EAGSKNSGED…VKEFVKSMEK (102 aa)).

In terms of biological role, GTPase activator for the Rho-type GTPases by converting them to an inactive GDP-bound state. In Mus musculus (Mouse), this protein is Rho GTPase-activating protein 25 (Arhgap25).